The chain runs to 255 residues: Phosphate import ATP-binding protein PstB (255 aa).

The region spanning 8–250 (IKSSNLNVHY…PGNKMTQDYI (243 aa)) is the ABC transporter domain. An ATP-binding site is contributed by 40–47 (GPSGCGKS).

Belongs to the ABC transporter superfamily. Phosphate importer (TC 3.A.1.7) family. The complex is composed of two ATP-binding proteins (PstB), two transmembrane proteins (PstC and PstA) and a solute-binding protein (PstS).

It is found in the cell inner membrane. The catalysed reaction is phosphate(out) + ATP + H2O = ADP + 2 phosphate(in) + H(+). Part of the ABC transporter complex PstSACB involved in phosphate import. Responsible for energy coupling to the transport system. This chain is Phosphate import ATP-binding protein PstB, found in Pelagibacter ubique (strain HTCC1062).